A 38-amino-acid polypeptide reads, in one-letter code: Bacteriocin BAC79 (38 aa).

The antimicrobial activity of BAC79 was completely lost after treatment with enzymes trypsin, pepsin, proteinase-K, and carboxypeptidase, while there was no loss of activity with either amylase or lipase. In terms of biological role, has antibacterial activity against a wide spectrum of Gram-positive and Gram-negative bacteria, including L.monocytogenes which is inhibited through disruption of the cell membrane. This chain is Bacteriocin BAC79, found in Weissella confusa (Lactobacillus confusus).